The following is a 396-amino-acid chain: Cathepsin E (396 aa).

The signal sequence occupies residues Met-1–Gly-19. Residues Ser-20–Met-53 constitute a propeptide, activation peptide. Residues Tyr-78 to Pro-396 enclose the Peptidase A1 domain. A glycan (N-linked (GlcNAc...) asparagine) is linked at Asn-90. Residue Asp-96 is part of the active site. Disulfide bonds link Cys-109–Cys-114 and Cys-272–Cys-276. Asp-281 is an active-site residue. A disulfide bond links Cys-314 and Cys-351.

Belongs to the peptidase A1 family. In terms of assembly, homodimer; disulfide-linked. In terms of processing, glycosylated. The nature of the carbohydrate chain varies between cell types. In fibroblasts, the proenzyme contains a high mannose-type oligosaccharide, while the mature enzyme contains a complex-type oligosaccharide. In erythrocyte membranes, both the proenzyme and mature enzyme contain a complex-type oligosaccharide. Two forms are produced by autocatalytic cleavage, form I begins at Ile-54, form II begins at Thr-57. In terms of tissue distribution, expressed abundantly in the stomach, the Clara cells of the lung and activated B-lymphocytes, and at lower levels in lymph nodes, skin and spleen. Not expressed in resting B-lymphocytes.

It is found in the endosome. It carries out the reaction Similar to cathepsin D, but slightly broader specificity.. Functionally, may have a role in immune function. Probably involved in the processing of antigenic peptides during MHC class II-mediated antigen presentation. May play a role in activation-induced lymphocyte depletion in the thymus, and in neuronal degeneration and glial cell activation in the brain. The sequence is that of Cathepsin E (CTSE) from Homo sapiens (Human).